Here is a 333-residue protein sequence, read N- to C-terminus: Dehydrodolichyl diphosphate synthase complex subunit DHDDS (333 aa).

The (2E,6E)-farnesyl diphosphate site is built by Asp34, Gly35, Arg37, Arg38, and Arg85. Isopentenyl diphosphate-binding residues include Asp34, Gly35, Arg37, Arg38, Arg85, Arg205, Arg211, and Ser213. Asp34 lines the Mg(2+) pocket.

It belongs to the UPP synthase family. The active dehydrodolichyl diphosphate synthase complex is a heterotetramer composed of a dimer of heterodimer of DHDDS and NUS1. Interacts with NPC2. It depends on Mg(2+) as a cofactor. As to expression, ubiquitous. Expressed at high levels in testis and kidney. Expressed in epididymis (at protein level).

Its subcellular location is the endoplasmic reticulum membrane. The enzyme catalyses n isopentenyl diphosphate + (2E,6E)-farnesyl diphosphate = a di-trans,poly-cis-polyprenyl diphosphate + n diphosphate. Its pathway is protein modification; protein glycosylation. It participates in lipid metabolism. Its activity is regulated as follows. Activated by phospholipids including cardiolipin, phosphatidylcholine, phosphatidylethanolamine, phosphatidylinositol and phosphatidylserine. Its function is as follows. With NUS1, forms the dehydrodolichyl diphosphate synthase (DDS) complex, an essential component of the dolichol monophosphate (Dol-P) biosynthetic machinery. Both subunits contribute to enzymatic activity, i.e. condensation of multiple copies of isopentenyl pyrophosphate (IPP) to farnesyl pyrophosphate (FPP) to produce dehydrodolichyl diphosphate (Dedol-PP), a precursor of dolichol phosphate which is utilized as a sugar carrier in protein glycosylation in the endoplasmic reticulum (ER). Synthesizes long-chain polyprenols, mostly of C95 and C100 chain length. Regulates the glycosylation and stability of nascent NPC2, thereby promoting trafficking of LDL-derived cholesterol. This chain is Dehydrodolichyl diphosphate synthase complex subunit DHDDS, found in Homo sapiens (Human).